A 186-amino-acid polypeptide reads, in one-letter code: Peptidyl-tRNA hydrolase (186 aa).

Y14 lines the tRNA pocket. Residue H19 is the Proton acceptor of the active site. TRNA contacts are provided by Y64, N66, and N112.

This sequence belongs to the PTH family. In terms of assembly, monomer.

The protein localises to the cytoplasm. It catalyses the reaction an N-acyl-L-alpha-aminoacyl-tRNA + H2O = an N-acyl-L-amino acid + a tRNA + H(+). Hydrolyzes ribosome-free peptidyl-tRNAs (with 1 or more amino acids incorporated), which drop off the ribosome during protein synthesis, or as a result of ribosome stalling. Its function is as follows. Catalyzes the release of premature peptidyl moieties from peptidyl-tRNA molecules trapped in stalled 50S ribosomal subunits, and thus maintains levels of free tRNAs and 50S ribosomes. This is Peptidyl-tRNA hydrolase from Geobacillus kaustophilus (strain HTA426).